We begin with the raw amino-acid sequence, 212 residues long: Thymidylate kinase (212 aa).

11–18 (GLEGAGKS) is an ATP binding site.

Belongs to the thymidylate kinase family.

The enzyme catalyses dTMP + ATP = dTDP + ADP. In terms of biological role, phosphorylation of dTMP to form dTDP in both de novo and salvage pathways of dTTP synthesis. The protein is Thymidylate kinase of Vibrio vulnificus (strain CMCP6).